A 154-amino-acid chain; its full sequence is MPNTDVSSLSMLGQQTETAQSPEQAVLEKVPSNHAGTDYVVRFTAPEFTSLCPMTGQPDFAHIVIDYIPGEWLVESKSLKLFLHSFRNHGAFHEDCSIYIAKRIVELLDPKWLRIGAYWYPRGGIPIDVFWQTGKPPEGVWLPEQGVATYRGRG.

Polar residues predominate over residues 1 to 23; the sequence is MPNTDVSSLSMLGQQTETAQSPE. Residues 1–26 are disordered; that stretch reads MPNTDVSSLSMLGQQTETAQSPEQAV. Catalysis depends on cysteine 52, which acts as the Thioimide intermediate. Catalysis depends on aspartate 59, which acts as the Proton donor. Residues 74–76 and 93–94 contribute to the substrate site; these read VES and HE.

Belongs to the GTP cyclohydrolase I family. QueF type 1 subfamily.

It is found in the cytoplasm. It carries out the reaction 7-aminomethyl-7-carbaguanine + 2 NADP(+) = 7-cyano-7-deazaguanine + 2 NADPH + 3 H(+). It functions in the pathway tRNA modification; tRNA-queuosine biosynthesis. In terms of biological role, catalyzes the NADPH-dependent reduction of 7-cyano-7-deazaguanine (preQ0) to 7-aminomethyl-7-deazaguanine (preQ1). The sequence is that of NADPH-dependent 7-cyano-7-deazaguanine reductase from Rhizobium leguminosarum bv. trifolii (strain WSM2304).